The sequence spans 205 residues: dTTP/UTP pyrophosphatase (205 aa).

The Proton acceptor role is filled by D66.

This sequence belongs to the Maf family. YhdE subfamily. A divalent metal cation serves as cofactor.

The protein resides in the cytoplasm. The catalysed reaction is dTTP + H2O = dTMP + diphosphate + H(+). It carries out the reaction UTP + H2O = UMP + diphosphate + H(+). In terms of biological role, nucleoside triphosphate pyrophosphatase that hydrolyzes dTTP and UTP. May have a dual role in cell division arrest and in preventing the incorporation of modified nucleotides into cellular nucleic acids. The chain is dTTP/UTP pyrophosphatase from Anaeromyxobacter sp. (strain Fw109-5).